A 74-amino-acid chain; its full sequence is Protein SlyX homolog (74 aa).

Belongs to the SlyX family.

The protein is Protein SlyX homolog of Neisseria meningitidis serogroup C (strain 053442).